The chain runs to 290 residues: Acetyl-coenzyme A carboxylase carboxyl transferase subunit beta (290 aa).

The CoA carboxyltransferase N-terminal domain maps to Leu-27–Ala-290. The Zn(2+) site is built by Cys-31, Cys-34, Cys-50, and Cys-53. The C4-type zinc finger occupies Cys-31–Cys-53.

The protein belongs to the AccD/PCCB family. Acetyl-CoA carboxylase is a heterohexamer composed of biotin carboxyl carrier protein (AccB), biotin carboxylase (AccC) and two subunits each of ACCase subunit alpha (AccA) and ACCase subunit beta (AccD). The cofactor is Zn(2+).

The protein resides in the cytoplasm. It carries out the reaction N(6)-carboxybiotinyl-L-lysyl-[protein] + acetyl-CoA = N(6)-biotinyl-L-lysyl-[protein] + malonyl-CoA. It functions in the pathway lipid metabolism; malonyl-CoA biosynthesis; malonyl-CoA from acetyl-CoA: step 1/1. Its function is as follows. Component of the acetyl coenzyme A carboxylase (ACC) complex. Biotin carboxylase (BC) catalyzes the carboxylation of biotin on its carrier protein (BCCP) and then the CO(2) group is transferred by the transcarboxylase to acetyl-CoA to form malonyl-CoA. The chain is Acetyl-coenzyme A carboxylase carboxyl transferase subunit beta from Burkholderia multivorans (strain ATCC 17616 / 249).